The chain runs to 523 residues: Sialate O-acetylesterase (523 aa).

Positions 1–23 (MVAPGLVLGLVLPLILWADRSAG) are cleaved as a signal peptide. Residues Asn-107, Asn-138, Asn-267, Asn-290, Asn-401, and Asn-422 are each glycosylated (N-linked (GlcNAc...) asparagine).

As to expression, widely expressed with high expression in the testis, prostate, and colon.

It localises to the lysosome. The protein resides in the cytoplasm. The catalysed reaction is N-acetyl-9-O-acetylneuraminate + H2O = N-acetylneuraminate + acetate + H(+). The enzyme catalyses an Ac-O-9-sialoglycoconjugate + H2O = a sialoglycoconjugate + acetate + H(+). Catalyzes the removal of O-acetyl ester groups from position 9 of the free diacetylated sialate N-acetyl-9-O-acetylneuraminate (Neu5,9Ac2) in the cytosol and of the diacetylated sialate residues of sialylglycoconjugates in the lysosomes. Together with the sialate-O-acetyltransferase they regulate the balance of acetylated sialoglycoconjugates, key players in various processes such as cell-cell interactions, host-pathogen recognition, and tumor antigenicity. This is Sialate O-acetylesterase (SIAE) from Homo sapiens (Human).